We begin with the raw amino-acid sequence, 206 residues long: Endoplasmic reticulum transmembrane protein 1 (206 aa).

At 1–7 (MSLYFTT) the chain is on the lumenal side. The chain crosses the membrane as a helical span at residues 8 to 28 (LFLLLTVEMVMLFIFVLPLPF). At 29–45 (RIRRGIFSTYNQLTAKQ) the chain is on the cytoplasmic side. Residues 46-66 (QIKTIIFITGCLVGLLFIDSW) form a helical membrane-spanning segment. At 67 to 104 (KRSQIRVSLYHNDNSGSIGSSAVTPIQALASRAYNQRN) the chain is on the lumenal side. Residues 105–125 (MYISGFILYFSICIPTVMSIV) form a helical membrane-spanning segment. Residues 126-206 (KRLVKYQGLI…AAAEASKKGN (81 aa)) lie on the Cytoplasmic side of the membrane. Positions 140–163 (KQKLNKPSSNSKKDSNEADSTKLQ) are disordered. Over residues 150–163 (SKKDSNEADSTKLQ) the composition is skewed to basic and acidic residues. A Glycyl lysine isopeptide (Lys-Gly) (interchain with G-Cter in ubiquitin) cross-link involves residue lysine 190. Positions 203 to 206 (KKGN) match the Di-lysine motif motif.

Belongs to the BCAP29/BCAP31 family.

The protein localises to the endoplasmic reticulum membrane. In terms of biological role, may play a role in anterograde transport of membrane proteins from the endoplasmic reticulum to the Golgi. The chain is Endoplasmic reticulum transmembrane protein 1 (YET1) from Saccharomyces cerevisiae (strain ATCC 204508 / S288c) (Baker's yeast).